The sequence spans 1145 residues: Nucleolar protein 6 (1145 aa).

Positions 1-46 (MQKKRNRAGPPQQEAASDDGEMSDSSDKMEVAQGKGKSAVKRAPDA) are disordered.

This sequence belongs to the NRAP family. In terms of assembly, part of the small subunit (SSU) processome, composed of more than 70 proteins and the RNA chaperone small nucleolar RNA (snoRNA) U3.

Its subcellular location is the nucleus. It is found in the nucleolus. It localises to the chromosome. Part of the small subunit (SSU) processome, first precursor of the small eukaryotic ribosomal subunit. During the assembly of the SSU processome in the nucleolus, many ribosome biogenesis factors, an RNA chaperone and ribosomal proteins associate with the nascent pre-rRNA and work in concert to generate RNA folding, modifications, rearrangements and cleavage as well as targeted degradation of pre-ribosomal RNA by the RNA exosome. The protein is Nucleolar protein 6 (nol6) of Xenopus tropicalis (Western clawed frog).